We begin with the raw amino-acid sequence, 84 residues long: uncharacterized protein (84 aa).

Residues 1–21 (MYYRRQGEPQEMYGNGNNSVS) form a disordered region. A helical membrane pass occupies residues 49 to 69 (YIIYAIVAAILLLLFWLLYKK).

It is found in the membrane. This is an uncharacterized protein from Invertebrate iridescent virus 6 (IIV-6).